The sequence spans 367 residues: MSSTAPLLTPYKMGRFDLSHRVVLAPLTRQRSYGNVPQPHAILYYQQRTTKGGLLIAEATGISDTAQGYKDTPGIWTKEQVEAWKPIVDGVHAKGGIFFCQIWHVGRVSNNTFQPNGQAPISSTNKSLKPAVRANGIDVATFSTPRRLETDEIPFVVNDYRVAARNAIEAGFDGVEIHGAHGYLIDQFLKDQVNDRSDKYGGSLENRCRFALEVVQAVTDEIGADKVGIRLSPFASYSEAADSNPEALGLYMANALNKFGILYCHMVEPRMVKLGEKFETPHSLRPIRDAFKGTFIAAGGYNKEDGNKAVSTGYTDLVAYGRLFLSNPDLPERFEIDAPLNKYNRETFYISDPVIGYTDYPFLPSDV.

FMN-binding positions include 26–28, Ala59, and Gln101; that span reads PLT. 178–181 serves as a coordination point for substrate; sequence HGAH. Catalysis depends on Tyr183, which acts as the Proton donor. Arg230 lines the FMN pocket. Substrate is bound at residue Arg270. FMN is bound by residues Gly300 and 321 to 322; that span reads GR.

It belongs to the NADH:flavin oxidoreductase/NADH oxidase family. FMN is required as a cofactor.

Its function is as follows. Putative oxophytodienoate reductase that may be involved in the biosynthesis or metabolism of oxylipin signaling molecules. The polypeptide is Putative 12-oxophytodienoate reductase 11 (OPR11) (Oryza sativa subsp. japonica (Rice)).